The chain runs to 883 residues: MNEQYSALRSNVSMLGKVLGETIKDALGEHILDRVETIRKLSKSSRAGNEANRQELLTTLQNLSNDELLPVARAFSQFLNLANTAEQYHSISPKGEAASNPEVIARTLRKLKNQPDLNDATIKKAVESLSLELVLTAHPTEITRRTLIHKMGEINNCLKQLDNTDIADYERHQVMRRLRQLIAQSWHTDEIRKQRPSPVDEAKWGFAVVENSLWQGVPNYLRELNEQLEENLGYKLPVDFVPVRFTSWMGGDRDGNPNVTADITRHVLLLSRWKATDLFLKDIHVLVSELSMVDATPELLALVGEEGASEPYRYLMKKLRARLMATQSWLEARLKGEKLPKPAGLLTQNEQLWEPLYACYQSLQACGMGIIANGELLDTLRRVKCFGVPLVRIDIRQESTRHTEALGEITRYLGIGDYESWSEADKQAFLIRELNSKRPLLPRNWEPSNDTREVLETCKVIAEAPKGSIAAYVISMAKTPSDVLAVHLLLKEAGIGFAMPVAPLFETLDDLNNADDVMTQLLNIDWYRGLIQGKQMVMIGYSDSAKDAGVMAASWAQYQAQDALIKTCEKAGIELTLFHGRGGSIGRGGAPAHAALLSQPPGSLKGGLRVTEQGEMIRFKYGLPEVTVSSLSLYTSAILEANLLPPPEPKDSWRHIMDELSVISCETYRGYVRENKDFVPYFRSATPEQELGKLPLGSRPAKRRPTGGVESLRAIPWIFAWTQNRLMLPAWLGAGTALQKVVEDGKQSELEAMCRDWPFFSTRLGMLEMVFSKADLWLADYYDQRLVAKTLWPLGKELRDLLEEDIKVVLAIANDSHLMADLPWIAESIQLRNVYTDPLNVLQAELLYRSRLTEEQGKSPDPRVEQALMVTIAGVAAGMRNTG.

Residues His138 and Lys546 contribute to the active site.

This sequence belongs to the PEPCase type 1 family. Mg(2+) is required as a cofactor.

It carries out the reaction oxaloacetate + phosphate = phosphoenolpyruvate + hydrogencarbonate. In terms of biological role, forms oxaloacetate, a four-carbon dicarboxylic acid source for the tricarboxylic acid cycle. The chain is Phosphoenolpyruvate carboxylase from Salmonella dublin (strain CT_02021853).